Here is a 229-residue protein sequence, read N- to C-terminus: Potassium/proton antiporter CemA (229 aa).

4 consecutive transmembrane segments (helical) span residues 6–26, 107–127, 152–172, and 190–210; these read AFIP…ISLC, IFNF…SFWG, FLIL…GWEL, and LSGL…YWIF.

Belongs to the CemA family.

Its subcellular location is the plastid. It is found in the chloroplast inner membrane. It catalyses the reaction K(+)(in) + H(+)(out) = K(+)(out) + H(+)(in). Functionally, contributes to K(+)/H(+) antiport activity by supporting proton efflux to control proton extrusion and homeostasis in chloroplasts in a light-dependent manner to modulate photosynthesis. Prevents excessive induction of non-photochemical quenching (NPQ) under continuous-light conditions. Indirectly promotes efficient inorganic carbon uptake into chloroplasts. This is Potassium/proton antiporter CemA from Aethionema cordifolium (Lebanon stonecress).